A 94-amino-acid chain; its full sequence is Alpha-elapitoxin-Nss2a (94 aa).

A signal peptide spans 1 to 21 (MKTLLLTLVVVTIVCLDLGDS). Disulfide bonds link Cys24-Cys41, Cys34-Cys62, Cys47-Cys51, Cys66-Cys77, and Cys78-Cys83.

This sequence belongs to the three-finger toxin family. Long-chain subfamily. Type II alpha-neurotoxin sub-subfamily. As to expression, expressed by the venom gland.

The protein localises to the secreted. In terms of biological role, binds with high affinity to muscular (alpha-1/CHRNA1) and neuronal (alpha-7/CHRNA7) nicotinic acetylcholine receptor (nAChR) and inhibits acetylcholine from binding to the receptor, thereby impairing neuromuscular and neuronal transmission. This Notechis scutatus scutatus (Mainland tiger snake) protein is Alpha-elapitoxin-Nss2a.